We begin with the raw amino-acid sequence, 530 residues long: Putative ABC transporter ATP-binding protein SSO2030 (530 aa).

ABC transporter domains lie at 6–243 (IRDL…LGLE) and 282–516 (ALYA…EPPL). ATP contacts are provided by residues 38–45 (GRSGSGKS) and 314–321 (GKNGSGKT).

It belongs to the ABC transporter superfamily.

It localises to the cell membrane. Its function is as follows. Probably part of an ABC transporter complex. Responsible for energy coupling to the transport system. The polypeptide is Putative ABC transporter ATP-binding protein SSO2030 (Saccharolobus solfataricus (strain ATCC 35092 / DSM 1617 / JCM 11322 / P2) (Sulfolobus solfataricus)).